Consider the following 257-residue polypeptide: Uracil phosphoribosyltransferase (257 aa).

5-phospho-alpha-D-ribose 1-diphosphate-binding positions include R77, R102, and 129 to 137 (DPMLATGGS). Residues I192 and 197 to 199 (GDA) each bind uracil. D198 provides a ligand contact to 5-phospho-alpha-D-ribose 1-diphosphate. The tract at residues 203–257 (QFGPNLFTSSAPSRPEAPAGRGRAAAKTPGRRSARSESPSSTSPSARSRKAAPPA) is disordered. Low complexity-rich tracts occupy residues 211–230 (SSAPSRPEAPAGRGRAAAKT) and 238–248 (SESPSSTSPSA).

It belongs to the UPRTase family. Mg(2+) serves as cofactor.

The catalysed reaction is UMP + diphosphate = 5-phospho-alpha-D-ribose 1-diphosphate + uracil. It functions in the pathway pyrimidine metabolism; UMP biosynthesis via salvage pathway; UMP from uracil: step 1/1. Its activity is regulated as follows. Allosterically activated by GTP. Its function is as follows. Catalyzes the conversion of uracil and 5-phospho-alpha-D-ribose 1-diphosphate (PRPP) to UMP and diphosphate. This Mycolicibacterium paratuberculosis (strain ATCC BAA-968 / K-10) (Mycobacterium paratuberculosis) protein is Uracil phosphoribosyltransferase.